Reading from the N-terminus, the 142-residue chain is Photosystem II extrinsic protein U (142 aa).

Residues 1-28 (MKKIGLLLTIFSLCLGCLGLVPSDKAHA) form the signal peptide.

This sequence belongs to the PsbU family. As to quaternary structure, PSII is composed of 1 copy each of membrane proteins PsbA, PsbB, PsbC, PsbD, PsbE, PsbF, PsbH, PsbI, PsbJ, PsbK, PsbL, PsbM, PsbT, PsbX, PsbY, PsbZ, Psb30/Ycf12, peripheral proteins PsbO, CyanoQ (PsbQ), PsbU, PsbV and a large number of cofactors. It forms dimeric complexes.

It localises to the cellular thylakoid membrane. One of the extrinsic, lumenal subunits of photosystem II (PSII). PSII is a light-driven water plastoquinone oxidoreductase, using light energy to abstract electrons from H(2)O, generating a proton gradient subsequently used for ATP formation. The extrinsic proteins stabilize the structure of photosystem II oxygen-evolving complex (OEC), the ion environment of oxygen evolution and protect the OEC against heat-induced inactivation. The protein is Photosystem II extrinsic protein U of Trichodesmium erythraeum (strain IMS101).